The chain runs to 304 residues: Thyroxine 5-deiodinase (304 aa).

The interval 1–22 (MPRQAASRLVVGEGEGPPGASG) is disordered. Residues 1 to 42 (MPRQAASRLVVGEGEGPPGASGPAATMLRSLLLHSLRLCAQT) are Cytoplasmic-facing. The chain crosses the membrane as a helical; Signal-anchor for type II membrane protein span at residues 43-62 (ASCLVLFPRFLGTAFMLWLL). Residues 63-304 (DFLCIRKHFL…QLHGTRPRRL (242 aa)) are Extracellular-facing. U170 is a catalytic residue. A non-standard amino acid (selenocysteine) is located at residue U170.

It belongs to the iodothyronine deiodinase family. In terms of assembly, monomer. Homodimer. May undergo minor heretodimerization with DIO1 and DIO2. Neonatal skin, placenta, skeletal muscle and cerebral cortex.

It is found in the cell membrane. Its subcellular location is the endosome membrane. The enzyme catalyses 3,3',5'-triiodo-L-thyronine + iodide + A + H(+) = L-thyroxine + AH2. It carries out the reaction 3,3'-diiodo-L-thyronine + iodide + A + H(+) = 3,3',5-triiodo-L-thyronine + AH2. It catalyses the reaction 3-iodo-L-thyronine + iodide + A + H(+) = 3,5-diiodo-L-thyronine + AH2. The catalysed reaction is L-thyronine + iodide + A + H(+) = 3-iodo-L-thyronine + AH2. The enzyme catalyses 3',5'-diiodo-L-thyronine + iodide + A + H(+) = 3,3',5'-triiodo-L-thyronine + AH2. It carries out the reaction 3'-iodo-L-thyronine + iodide + A + H(+) = 3,3'-diiodo-L-thyronine + AH2. It catalyses the reaction 3,3',5'-triiodothyronamine + iodide + A + H(+) = 3,3',5,5'-tetraiodothyronamine + AH2. The catalysed reaction is 3',5'-diiodothyronamine + iodide + A + H(+) = 3,3',5'-triiodothyronamine + AH2. The enzyme catalyses 3,3'-diiodothyronamine + iodide + A + H(+) = 3,3',5-triiodothyronamine + AH2. It carries out the reaction 3-iodothyronamine + iodide + A + H(+) = 3,5-diiodothyronamine + AH2. It catalyses the reaction 3'-iodothyronamine + iodide + A + H(+) = 3,3'-diiodothyronamine + AH2. The catalysed reaction is thyronamine + iodide + A + H(+) = 3-iodothyronamine + AH2. Functionally, plays a crucial role in the metabolism of thyroid hormones (TH) and has specific roles in TH activation and inactivation by deiodination. Catalyzes the deiodination of L-thyroxine (T4) to 3,3',5'-triiodothyronine (rT3), 3,5-diiodothyronine (3,5-T2) to 3-monoiodothyronine (3-T1), rT3 to 3',5'-diiodothyronine (3',5'-T2) and 3,3'-diiodothyronine (3,3'-T2) to 3'-monoiodothyronine (3'-T1) via inner-ring deiodination (IRD). Catalyzes the deiodination of 3,5,3'-triiodothyronine (T3) to 3,3'-diiodothyronine (3,3'-T2) via IRD. Catalyzes the deiodination of 3-T1 to L-thyronine (T0) via outer-ring deiodination (ORD). Catalyzes the tyrosyl ring deiodinations of T4AM (3,3',5,5'-tetraiodothyronamine), rT3AM (3,3',5'-triiodothyronamine), T3AM (3,5,3'-triiodothyronamine), 3,5-T2AM (3,5-diiodothyronamine), 3,3'-T2AM (3,3'-diiodothyronamine) and 3-T1AM (3-iodothyronamine). The sequence is that of Thyroxine 5-deiodinase (Dio3) from Rattus norvegicus (Rat).